The following is a 438-amino-acid chain: Cysteine--tRNA ligase (438 aa).

C28 provides a ligand contact to Zn(2+). The 'HIGH' region motif lies at 30 to 40 (PTVYNHLHLGN). C207, H232, and E236 together coordinate Zn(2+). The short motif at 264–268 (KMSKS) is the 'KMSKS' region element. K267 is a binding site for ATP.

The protein belongs to the class-I aminoacyl-tRNA synthetase family. Monomer. Zn(2+) serves as cofactor.

Its subcellular location is the cytoplasm. The enzyme catalyses tRNA(Cys) + L-cysteine + ATP = L-cysteinyl-tRNA(Cys) + AMP + diphosphate. The protein is Cysteine--tRNA ligase of Aster yellows witches'-broom phytoplasma (strain AYWB).